Consider the following 123-residue polypeptide: Large ribosomal subunit protein bL12 (123 aa).

This sequence belongs to the bacterial ribosomal protein bL12 family. As to quaternary structure, homodimer. Part of the ribosomal stalk of the 50S ribosomal subunit. Forms a multimeric L10(L12)X complex, where L10 forms an elongated spine to which 2 to 4 L12 dimers bind in a sequential fashion. Binds GTP-bound translation factors.

Functionally, forms part of the ribosomal stalk which helps the ribosome interact with GTP-bound translation factors. Is thus essential for accurate translation. The protein is Large ribosomal subunit protein bL12 of Clostridium botulinum (strain ATCC 19397 / Type A).